Consider the following 583-residue polypeptide: Probable lysosomal cobalamin transporter (583 aa).

10 helical membrane-spanning segments follow: residues Leu-8 to Ile-28, Val-41 to Val-61, Ile-95 to Ile-115, Thr-145 to Ala-165, Ala-188 to Thr-208, Leu-312 to Thr-332, Gly-347 to Ala-367, Val-375 to Val-395, Leu-418 to Ile-438, and Phe-506 to Met-526. Residues Leu-541–Ser-552 are compositionally biased toward acidic residues. Residues Leu-541–Glu-562 are disordered.

This sequence belongs to the LIMR family. LMBRD1 subfamily.

The protein resides in the lysosome membrane. Functionally, probable lysosomal cobalamin transporter. Required to export cobalamin from lysosomes allowing its conversion to cofactors. The sequence is that of Probable lysosomal cobalamin transporter from Aspergillus oryzae (strain ATCC 42149 / RIB 40) (Yellow koji mold).